Here is a 464-residue protein sequence, read N- to C-terminus: Aspartyl protease AED1 (464 aa).

The signal sequence occupies residues 1-25 (MSIMRNFLSMIIMLCVCLNWCFAEG). The Peptidase A1 domain maps to 132-460 (YIVTIGIGTP…DVAGGRVGFA (329 aa)). Catalysis depends on residues D150 and D345. C384 and C425 are joined by a disulfide.

The protein belongs to the peptidase A1 family.

It localises to the secreted. The protein localises to the extracellular space. Its subcellular location is the apoplast. In terms of biological role, aspartyl protease involved in a homeostatic feedback mechanism regulating systemic immunity. Has only mild or no influence on local defenses. Acts downstream of salicylic acid to suppress systemic immunity. In Arabidopsis thaliana (Mouse-ear cress), this protein is Aspartyl protease AED1.